Reading from the N-terminus, the 1328-residue chain is ABC transporter C family member 7 (1328 aa).

In terms of domain architecture, ABC transmembrane type-1 1 spans 104 to 389 (HKTSIIVQIF…LPQAIQRLLS (286 aa)). Helical transmembrane passes span 112–132 (IFSAIVSVLSPLCLRAFILYV), 140–160 (SFLVGLFYAVLVLMGALFLSI), 224–244 (LILLVAPIQIIALLALLCWTI), 245–265 (GYSGLVGFLIMILSLPLSTFL), 287–307 (ISEMINGIYLLKLYNWELFFI), and 333–353 (MVVQISSALVLVSSFTVYTLI). Residues 457 to 678 (IELVNNDSIE…FDFESIMKTK (222 aa)) enclose the ABC transporter 1 domain. ATP is bound at residue 490-497 (GVVGSGKS). Over residues 684–695 (LNNSNNNNNNNN) the composition is skewed to low complexity. Residues 684–708 (LNNSNNNNNNNNNKEEEEDVENLEK) form a disordered region. Transmembrane regions (helical) follow at residues 762–782 (FIFFFTMIMMYIISQLLFLLF), 802–822 (DSFYILYYLLLVGLFSVFLGI), 894–914 (VLMMIVINPLIVFPFLLLALF), 988–1008 (IGIKIEIISSAAVFLSAFFSL), and 1014–1034 (GLSVLAVTTSLSLTGYLNWCI). The ABC transmembrane type-1 2 domain occupies 765–1046 (FFTMIMMYII…YIEFSMKMSS (282 aa)). The 234-residue stretch at 1083–1316 (IQFKNVEIKY…INNQNSKFKK (234 aa)) folds into the ABC transporter 2 domain. Residue 1117–1124 (GKSGSGKS) coordinates ATP.

The protein belongs to the ABC transporter superfamily. ABCC family. Conjugate transporter (TC 3.A.1.208) subfamily.

The protein resides in the membrane. This Dictyostelium discoideum (Social amoeba) protein is ABC transporter C family member 7 (abcC7).